We begin with the raw amino-acid sequence, 322 residues long: Packaging protein 3 (322 aa).

The interval methionine 1 to leucine 24 is disordered. An interaction with packaging protein 1 region spans residues methionine 1–threonine 127.

This sequence belongs to the adenoviridae packaging protein 3 family. Part of the genome packaging complex composed of packaging proteins 1, 2 and 3; this complex specifically binds to the packaging sequence on the left end of viral genomic DNA and performs packaging of the viral genome. Interacts with hexon-linking protein IIIa; this interaction is required to promote correct genome packaging. Post-translationally, cleaved at different sites by the viral protease during virion maturation.

The protein localises to the host nucleus. In terms of biological role, involved in viral genome packaging through its interaction with packaging proteins 1 and 2. After proteolytic cleavage by adenovirus protease, L1 52/55k protein is removed from the capsid during viral maturation. The sequence is that of Packaging protein 3 from Pantherophis guttatus (Corn snake).